A 603-amino-acid chain; its full sequence is Methionine--tRNA ligase (603 aa).

The 'HIGH' region motif lies at 14–24 (PYANGPRHIGH). Residues C146, C149, C159, and C162 each contribute to the Zn(2+) site. The 'KMSKS' region motif lies at 354–358 (KFSSS). S357 is a binding site for ATP.

It belongs to the class-I aminoacyl-tRNA synthetase family. MetG type 1 subfamily. In terms of assembly, monomer. The cofactor is Zn(2+).

It localises to the cytoplasm. It catalyses the reaction tRNA(Met) + L-methionine + ATP = L-methionyl-tRNA(Met) + AMP + diphosphate. Is required not only for elongation of protein synthesis but also for the initiation of all mRNA translation through initiator tRNA(fMet) aminoacylation. The protein is Methionine--tRNA ligase of Salinispora tropica (strain ATCC BAA-916 / DSM 44818 / JCM 13857 / NBRC 105044 / CNB-440).